We begin with the raw amino-acid sequence, 502 residues long: Lysine--tRNA ligase (502 aa).

Residues E398 and E405 each contribute to the Mg(2+) site.

It belongs to the class-II aminoacyl-tRNA synthetase family. Homodimer. The cofactor is Mg(2+).

The protein resides in the cytoplasm. The catalysed reaction is tRNA(Lys) + L-lysine + ATP = L-lysyl-tRNA(Lys) + AMP + diphosphate. This chain is Lysine--tRNA ligase, found in Thermotoga sp. (strain RQ2).